An 86-amino-acid chain; its full sequence is Exodeoxyribonuclease 7 small subunit (86 aa).

The protein belongs to the XseB family. As to quaternary structure, heterooligomer composed of large and small subunits.

Its subcellular location is the cytoplasm. The catalysed reaction is Exonucleolytic cleavage in either 5'- to 3'- or 3'- to 5'-direction to yield nucleoside 5'-phosphates.. Bidirectionally degrades single-stranded DNA into large acid-insoluble oligonucleotides, which are then degraded further into small acid-soluble oligonucleotides. The sequence is that of Exodeoxyribonuclease 7 small subunit from Bacillus licheniformis (strain ATCC 14580 / DSM 13 / JCM 2505 / CCUG 7422 / NBRC 12200 / NCIMB 9375 / NCTC 10341 / NRRL NRS-1264 / Gibson 46).